The primary structure comprises 401 residues: Phosphoglycerate kinase (401 aa).

Residues 21 to 23, R36, 59 to 62, R119, and R160 contribute to the substrate site; these read DFN and HLGR. Residues K212, E330, and 357–360 each bind ATP; that span reads GGDS.

This sequence belongs to the phosphoglycerate kinase family. As to quaternary structure, monomer.

Its subcellular location is the cytoplasm. The catalysed reaction is (2R)-3-phosphoglycerate + ATP = (2R)-3-phospho-glyceroyl phosphate + ADP. Its pathway is carbohydrate degradation; glycolysis; pyruvate from D-glyceraldehyde 3-phosphate: step 2/5. This Limosilactobacillus fermentum (strain NBRC 3956 / LMG 18251) (Lactobacillus fermentum) protein is Phosphoglycerate kinase.